Reading from the N-terminus, the 382-residue chain is Palmitoyltransferase ZDHHC16B (382 aa).

Residues 1 to 75 (MRSWRWSVSR…IYWLVDNMTR (75 aa)) are Cytoplasmic-facing. The chain crosses the membrane as a helical span at residues 76–96 (WFGVVFVCLVMALTSSVVVIV). Topologically, residues 97–107 (YLCVLPIIFSS) are lumenal. Residues 108-130 (YPVYWILWHLCYGHWNLLMVVFH) traverse the membrane as a helical segment. The Cytoplasmic portion of the chain corresponds to 131–196 (YYKATTTQPG…NNCVGHFNHR (66 aa)). The DHHC domain maps to 153 to 203 (TICKKCIVPKPARTHHCSICNRCILKMDHHCPWLNNCVGHFNHRYFFSFCL). Cys-183 (S-palmitoyl cysteine intermediate) is an active-site residue. A helical transmembrane segment spans residues 197-217 (YFFSFCLFMTMGCVYCSISAK). At 218-275 (DMFLDAYNAIESGRYKGGASQGEAVPGAGLIYISFQHQSSYQTPPPAFTHQERMVHKS) the chain is on the lumenal side. The helical transmembrane segment at 276–296 (LVYLWVLTSSVAVALGALTLW) threads the bilayer. The Cytoplasmic portion of the chain corresponds to 297–382 (HAILITRGET…PAYKSSTTAI (86 aa)).

The protein belongs to the DHHC palmitoyltransferase family.

Its subcellular location is the endoplasmic reticulum membrane. It catalyses the reaction L-cysteinyl-[protein] + hexadecanoyl-CoA = S-hexadecanoyl-L-cysteinyl-[protein] + CoA. Palmitoyl acyltransferase that mediates palmitoylation of proteins and is required during embryonic heart development. Involved in the proliferation of neural stem cells by regulating the FGF/ERK pathway. This Danio rerio (Zebrafish) protein is Palmitoyltransferase ZDHHC16B.